A 448-amino-acid polypeptide reads, in one-letter code: Rhodopsin (448 aa).

The Extracellular segment spans residues 2–33 (GRDLRDNETWWYNPSIVVHPHWREFDQVPDAV). Asn8 carries an N-linked (GlcNAc...) asparagine glycan. The chain crosses the membrane as a helical span at residues 34 to 58 (YYSLGIFIGICGIIGCGGNGIVIYL). The Cytoplasmic segment spans residues 59-70 (FTKTKSLQTPAN). The chain crosses the membrane as a helical span at residues 71–97 (MFIINLAFSDFTFSLVNGFPLMTISCF). The Extracellular segment spans residues 98–109 (LKKWIFGFAACK). A disulfide bond links Cys108 and Cys186. The helical transmembrane segment at 110 to 131 (VYGFIGGIFGFMSIMTMAMISI) threads the bilayer. The Cytoplasmic segment spans residues 132–151 (DRYNVIGRPMAASKKMSHRR). The helical transmembrane segment at 152–172 (AFIMIIFVWLWSVLWAIGPIF) threads the bilayer. Over 173–199 (GWGAYTLEGVLCNCSFDYISRDSTTRS) the chain is Extracellular. The chain crosses the membrane as a helical span at residues 200–224 (NILCMFILGFFGPILIIFFCYFNIV). Residues 225–261 (MSVSNHEKEMAAMAKRLNAKELRKAQAGANAEMRLAK) lie on the Cytoplasmic side of the membrane. The chain crosses the membrane as a helical span at residues 262-283 (ISIVIVSQFLLSWSPYAVVALL). Over 284-293 (AQFGPLEWVT) the chain is Extracellular. The chain crosses the membrane as a helical span at residues 294 to 315 (PYAAQLPVMFAKASAIHNPMIY). Position 305 is an N6-(retinylidene)lysine (Lys305). At 316–448 (SVSHPKFREA…QGVDNQAYQA (133 aa)) the chain is on the cytoplasmic side. Residues Cys336 and Cys337 are each lipidated (S-palmitoyl cysteine). The segment covering 343–352 (ETEDDKDAET) has biased composition (acidic residues). A disordered region spans residues 343-448 (ETEDDKDAET…QGVDNQAYQA (106 aa)). A compositionally biased stretch (low complexity) spans 359-391 (SSDAAPSADAAQMKEMMAMMQKMQQQQAAYPPQ). Over residues 392 to 437 (GYAPPPQGYPPQGYPPQGYPPQGYPPQGYPPPPQGAPPQGAPPAAP) the composition is skewed to pro residues.

Belongs to the G-protein coupled receptor 1 family. Opsin subfamily. Contains one covalently linked retinal chromophore. Upon light absorption, the covalently bound 11-cis-retinal is converted to all-trans-retinal. After hydrolysis of the Schiff base and release of the covalently bound all-trans-retinal, active rhodopsin is regenerated by binding of a fresh molecule of 11-cis-retinal. Retina, rhabdomere membrane of photoreceptor cells (at protein level).

The protein localises to the cell projection. It localises to the rhabdomere membrane. Photoreceptor required for image-forming vision at low light intensity. Light-induced isomerization of 11-cis to all-trans retinal triggers a conformational change that activates signaling via G-proteins. Signaling mediates the activation of phospholipase C. Subsequent receptor phosphorylation mediates displacement of the bound G-protein alpha subunit by arrestin and terminates signaling. This chain is Rhodopsin (RHO), found in Todarodes pacificus (Japanese flying squid).